Consider the following 181-residue polypeptide: Inner membrane-spanning protein YciB (181 aa).

Helical transmembrane passes span 10–30 (LVIFFAVYKFFDIYIASGALI), 50–70 (MHLITFVMVTVFGSLTLILHD), 72–92 (SFIKWKVTIVYALFAIALGVS), 118–138 (VTWYWVSFFVVCGLVNIYVAF), and 148–168 (FKVFGLTALTLINTVLTVVYL).

It belongs to the YciB family.

Its subcellular location is the cell inner membrane. In terms of biological role, plays a role in cell envelope biogenesis, maintenance of cell envelope integrity and membrane homeostasis. The chain is Inner membrane-spanning protein YciB from Shewanella pealeana (strain ATCC 700345 / ANG-SQ1).